The following is a 486-amino-acid chain: Probable peptidoglycan glycosyltransferase FtsW (486 aa).

Over 1 to 50 (MAGAARDRAFLDHFGGAGADRPCHVEGALMNDMSRQATRLDAIGGRYDPW) the chain is Cytoplasmic. The helical transmembrane segment at 51-71 (LLGAAVTLASLGVVMVASSSI) threads the bilayer. Topologically, residues 72 to 77 (ELEASP) are periplasmic. The helical transmembrane segment at 78-98 (FYYLTRHLLFLGGGIALAFWA) threads the bilayer. The Cytoplasmic segment spans residues 99–112 (MRTELKTIEQHNQM). A helical transmembrane segment spans residues 113–133 (LLLACFVLLVVVFVPGLGSTV). The Periplasmic portion of the chain corresponds to 134–141 (NGAKRWIN). Residues 142-162 (LGVSRFQVVESVKVFYIIWLA) form a helical membrane-spanning segment. The Cytoplasmic portion of the chain corresponds to 163–174 (SYLVRFRDEVNA). A helical transmembrane segment spans residues 175–195 (TWQAMLKPVFVVGLLVGLLLL). Residues 196 to 199 (QPDF) are Periplasmic-facing. The helical transmembrane segment at 200–220 (GSSMLLLSVTACMLVLGGAPI) threads the bilayer. Residues 221–222 (GR) lie on the Cytoplasmic side of the membrane. The helical transmembrane segment at 223–243 (IILPILLLLPALVALVIFEPY) threads the bilayer. Topologically, residues 244-298 (RMRRVTSFMDPWVDQLGSGYQLSNALMAIGRGQWTGVGLGASVQKLNYLPESHTD) are periplasmic. A helical transmembrane segment spans residues 299 to 319 (FIFSVIAEELGFVGVCGVIGL). At 320–342 (YALLVGRAFWLGMRCVEMKRHFS) the chain is on the cytoplasmic side. A helical transmembrane segment spans residues 343–363 (GYIAFGIGLWIAMQSFVSIGV). Over 364–374 (NLGILPTKGLT) the chain is Periplasmic. Residues 375-395 (LPLISSGGSSVLMTCLAMGVL) traverse the membrane as a helical segment. Residues 396 to 486 (LRVSYEADRA…RVEPTFGRIA (91 aa)) lie on the Cytoplasmic side of the membrane.

This sequence belongs to the SEDS family. FtsW subfamily.

The protein resides in the cell inner membrane. The enzyme catalyses [GlcNAc-(1-&gt;4)-Mur2Ac(oyl-L-Ala-gamma-D-Glu-L-Lys-D-Ala-D-Ala)](n)-di-trans,octa-cis-undecaprenyl diphosphate + beta-D-GlcNAc-(1-&gt;4)-Mur2Ac(oyl-L-Ala-gamma-D-Glu-L-Lys-D-Ala-D-Ala)-di-trans,octa-cis-undecaprenyl diphosphate = [GlcNAc-(1-&gt;4)-Mur2Ac(oyl-L-Ala-gamma-D-Glu-L-Lys-D-Ala-D-Ala)](n+1)-di-trans,octa-cis-undecaprenyl diphosphate + di-trans,octa-cis-undecaprenyl diphosphate + H(+). It participates in cell wall biogenesis; peptidoglycan biosynthesis. Functionally, peptidoglycan polymerase that is essential for cell division. The chain is Probable peptidoglycan glycosyltransferase FtsW from Xanthomonas oryzae pv. oryzae (strain KACC10331 / KXO85).